The primary structure comprises 153 residues: Peritrophin-1 (153 aa).

The signal sequence occupies residues 1–17 (MKVSASLVLLLAAAVLA). 2 Chitin-binding type-2 domains span residues 18–79 (DDRC…QCAP) and 92–153 (SPNC…QCEE). Disulfide bonds link cysteine 56–cysteine 69 and cysteine 130–cysteine 143. An N-linked (GlcNAc...) asparagine glycan is attached at asparagine 63.

Glycosylated. In terms of tissue distribution, adult peritrophic membrane.

Functionally, binds chitin but not cellulose. May be involved in the spatial organization of PM. This Anopheles gambiae (African malaria mosquito) protein is Peritrophin-1 (Aper1).